A 228-amino-acid chain; its full sequence is MPGARDQGAARARWLGIGLLGLFLLPVSLSLEVSVGKATTIYAVNGTEILLPCTFSSCFGFENLHFWWSYNSSDTYKILIDGTVKNEKSDPKVKLKDDDRITLEGSTKEKMNNISISLKNLEFSDTGKYTCHVKNPKENDFQHQATIFLQVVDKLEEVDNTVTLIILGVVGGVIGLLIFILLVKKFIAFIIKKTQEKKKECLVSSSGNDNTENGLPGSKAEEKAPTKV.

The signal sequence occupies residues 1 to 30 (MPGARDQGAARARWLGIGLLGLFLLPVSLS). One can recognise an Ig-like C2-type domain in the interval 31 to 148 (LEVSVGKATT…NDFQHQATIF (118 aa)). The Extracellular segment spans residues 31-162 (LEVSVGKATT…DKLEEVDNTV (132 aa)). Asn45, Asn71, and Asn113 each carry an N-linked (GlcNAc...) asparagine glycan. An intrachain disulfide couples Cys53 to Cys131. The chain crosses the membrane as a helical span at residues 163–183 (TLIILGVVGGVIGLLIFILLV). The Cytoplasmic segment spans residues 184–228 (KKFIAFIIKKTQEKKKECLVSSSGNDNTENGLPGSKAEEKAPTKV). The segment at 198–228 (KKECLVSSSGNDNTENGLPGSKAEEKAPTKV) is disordered. Residues 203 to 213 (VSSSGNDNTEN) are compositionally biased toward polar residues. Basic and acidic residues predominate over residues 219-228 (KAEEKAPTKV).

The protein belongs to the sodium channel auxiliary subunit SCN4B (TC 8.A.17) family. In terms of assembly, a voltage-gated sodium (Nav) channel consists of an ion-conducting pore-forming alpha subunit functional on its own that is regulated by one or more beta subunits. The beta subunit SCN4B is disulfide-linked to the pore-forming alpha subunit. Interacts with SCN1A; regulatory subunit of SCN1A/Nav1.1. Interacts with SCN2A; regulatory subunit of SCN2A/Nav1.2. Post-translationally, contains an interchain disulfide bond with SCN2A.

Its subcellular location is the cell membrane. Functionally, regulatory subunit of multiple voltage-gated sodium (Nav) channels directly mediating the depolarization of excitable membranes. Navs, also called VGSCs (voltage-gated sodium channels) or VDSCs (voltage-dependent sodium channels), operate by switching between closed and open conformations depending on the voltage difference across the membrane. In the open conformation they allow Na(+) ions to selectively pass through the pore, along their electrochemical gradient. The influx of Na+ ions provokes membrane depolarization, initiating the propagation of electrical signals throughout cells and tissues. The accessory beta subunits participate in localization and functional modulation of the Nav channels. Modulates the activity of SCN1A/Nav1.1. Modulates the activity of SCN2A/Nav1.2. In Bos taurus (Bovine), this protein is Sodium channel regulatory subunit beta-4.